The following is a 621-amino-acid chain: Phosphatidylinositol-3,5-bisphosphate 3-phosphatase MTMR6 (621 aa).

Residues 1–101 form the GRAM domain; it reads MEHIRTTKVE…YNSLLQLSKQ (101 aa). The interaction with RAB1B stretch occupies residues 2 to 141; it reads EHIRTTKVEQ…EEYKRMGVPN (140 aa). A Phosphotyrosine modification is found at Tyr108. A Myotubularin phosphatase domain is found at 124–499; sequence GWQLIDLAEE…FNFKFWRNMY (376 aa). Positions 248, 273, and 274 each coordinate a 1,2-diacyl-sn-glycero-3-phospho-(1D-myo-inositol-3,5-bisphosphate). A 1,2-diacyl-sn-glycero-3-phospho-(1D-myo-inositol-3-phosphate) is bound by residues Asn248, Asn273, and Ile274. Residue Cys336 is the Phosphocysteine intermediate of the active site. Residues Ser337, Asp338, Gly339, Trp340, Asp341, Arg342, Lys378, and Arg382 each coordinate a 1,2-diacyl-sn-glycero-3-phospho-(1D-myo-inositol-3,5-bisphosphate). A 1,2-diacyl-sn-glycero-3-phospho-(1D-myo-inositol-3-phosphate) contacts are provided by Ser337, Asp338, Gly339, Trp340, Asp341, and Arg342. Arg382 serves as a coordination point for a 1,2-diacyl-sn-glycero-3-phospho-(1D-myo-inositol-3-phosphate). Phosphoserine occurs at positions 556, 561, 589, and 611.

It belongs to the protein-tyrosine phosphatase family. Non-receptor class myotubularin subfamily. As to quaternary structure, homodimer. Heterodimer (via C-terminus) with MTMR9 (via C-terminus). Interacts with ALKBH4. Interacts with KCNN4. Interacts (via GRAM domain) with RAB1B (in GDP-bound form); the interaction regulates MTMR6 recruitment to the endoplasmic reticulum-Golgi intermediate compartment. In terms of tissue distribution, expressed in CD4+ T-cells.

Its subcellular location is the cytoplasm. It is found in the endoplasmic reticulum-Golgi intermediate compartment. It localises to the endoplasmic reticulum. The protein localises to the cell projection. The protein resides in the ruffle membrane. Its subcellular location is the perinuclear region. It catalyses the reaction a 1,2-diacyl-sn-glycero-3-phospho-(1D-myo-inositol-3,5-bisphosphate) + H2O = a 1,2-diacyl-sn-glycero-3-phospho-(1D-myo-inositol-5-phosphate) + phosphate. It carries out the reaction a 1,2-diacyl-sn-glycero-3-phospho-(1D-myo-inositol-3-phosphate) + H2O = a 1,2-diacyl-sn-glycero-3-phospho-(1D-myo-inositol) + phosphate. The catalysed reaction is 1,2-dioctanoyl-sn-glycero-3-phospho-(1D-myo-inositol-3,5-bisphosphate) + H2O = 1,2-dioctanoyl-sn-glycero-3-phospho-(1D-myo-inositol-5-phosphate) + phosphate. The enzyme catalyses 1,2-dioctanoyl-sn-glycero-3-phospho-(1-D-myo-inositol-3-phosphate) + H2O = 1,2-dioctanoyl-sn-glycero-3-phospho-(1D-myo-inositol) + phosphate. With respect to regulation, allosterically activated by phosphatidylserine and/or phosphatidylinositol 4-phosphate (PtdIns(4)P), and phosphatidylinositol 5-phosphate (PtdIns(5)P). Interaction with MTMR9 increases catalytic activity towards phosphatidylinositol 3,5-bisphosphate. Functionally, lipid phosphatase that specifically dephosphorylates the D-3 position of phosphatidylinositol 3-phosphate and phosphatidylinositol 3,5-bisphosphate, generating phosphatidylinositol and phosphatidylinositol 5-phosphate. Binds with high affinity to phosphatidylinositol 3,5-bisphosphate (PtdIns(3,5)P2) but also to phosphatidylinositol 3-phosphate (PtdIns(3)P), phosphatidylinositol 4-phosphate (PtdIns(4)P), and phosphatidylinositol 5-phosphate (PtdIns(5)P), phosphatidic acid and phosphatidylserine. Negatively regulates ER-Golgi protein transport. Probably in association with MTMR9, plays a role in the late stages of macropinocytosis by dephosphorylating phosphatidylinositol 3-phosphate in membrane ruffles. Acts as a negative regulator of KCNN4/KCa3.1 channel activity in CD4(+) T-cells possibly by decreasing intracellular levels of phosphatidylinositol 3-phosphate. Negatively regulates proliferation of reactivated CD4(+) T-cells. In complex with MTMR9, negatively regulates DNA damage-induced apoptosis. The formation of the MTMR6-MTMR9 complex stabilizes both MTMR6 and MTMR9 protein levels. This Homo sapiens (Human) protein is Phosphatidylinositol-3,5-bisphosphate 3-phosphatase MTMR6.